The sequence spans 193 residues: Ribosomal RNA small subunit methyltransferase G (193 aa).

Residues Gly64, Leu69, 113 to 114, and Arg126 contribute to the S-adenosyl-L-methionine site; that span reads IE.

This sequence belongs to the methyltransferase superfamily. RNA methyltransferase RsmG family.

It localises to the cytoplasm. It carries out the reaction guanosine(527) in 16S rRNA + S-adenosyl-L-methionine = N(7)-methylguanosine(527) in 16S rRNA + S-adenosyl-L-homocysteine. Specifically methylates the N7 position of guanine in position 527 of 16S rRNA. In Rickettsia massiliae (strain Mtu5), this protein is Ribosomal RNA small subunit methyltransferase G.